Reading from the N-terminus, the 218-residue chain is Protease PrsW (218 aa).

A helical transmembrane segment spans residues 1-23; the sequence is MFAIISAGIAPGIALLSYFYLKD. Over 24–30 the chain is Cytoplasmic; that stretch reads QYDNEPV. Residues 31 to 53 traverse the membrane as a helical segment; that stretch reads HMVLRSFFLGVVLVFPIMFIQYV. Topologically, residues 54 to 98 are extracellular; it reads LEKENVGGGSFFVSFLSSGFLEESLKWFILMISVYPHAHFDEHYD. Residues 99–121 traverse the membrane as a helical segment; the sequence is GIVYGASVSLGFATLENILYLIG. The Cytoplasmic segment spans residues 122–129; that stretch reads HGVEHAFV. The chain crosses the membrane as a helical span at residues 130 to 151; sequence RALLPVSCHALIGVIMGFYLGK. At 152–180 the chain is on the extracellular side; that stretch reads ARFSADKARVKWLTLSLVVPSLLHGSYDF. The chain crosses the membrane as a helical span at residues 181–203; sequence ILTALSNWIYYMLPFMVFLWWFG. Residues 204-218 lie on the Cytoplasmic side of the membrane; sequence LRKAKKARSVNMMQV.

The protein belongs to the protease PrsW family.

It localises to the cell membrane. Its function is as follows. Involved in the degradation of anti-sigma-W factor RsiW. Responsible for Site-1 cleavage of the RsiW anti-sigma factor. This results, after two other proteolytic steps catalyzed by the RasP and ClpXP proteases, in the release of SigW and the transcription activation of the genes under the control of the sigma-W factor. Seems to be responsible for sensing antimicrobial peptides that damage the cell membrane and other agents that cause cell envelope stress. Therefore it is a protease governing regulated intramembrane proteolysis and resistance to antimicrobial peptides in B.subtilis. This is Protease PrsW from Bacillus subtilis (strain 168).